The following is a 423-amino-acid chain: Divalent metal cation transporter MntH (423 aa).

11 helical membrane passes run Leu31–Ala51, Ser58–Ile78, Ile116–Val136, Phe137–Ile157, Val168–Ala188, Ala213–Phe233, Ile254–Phe274, Val302–Ala322, Phe342–Leu362, Val363–Phe383, and Tyr401–Leu421.

This sequence belongs to the NRAMP family.

Its subcellular location is the cell inner membrane. Its function is as follows. H(+)-stimulated, divalent metal cation uptake system. The sequence is that of Divalent metal cation transporter MntH from Vibrio campbellii (strain ATCC BAA-1116).